The following is a 380-amino-acid chain: Mitogen-activated protein kinase mpkC (380 aa).

The 281-residue stretch at 20–300 (YVNLQPIGMG…AQDALRHPYL (281 aa)) folds into the Protein kinase domain. Residues 26-34 (IGMGSFGLV) and Lys-49 each bind ATP. The Proton acceptor role is filled by Asp-141. Thr-171 carries the post-translational modification Phosphothreonine. The TXY motif lies at 171–173 (TGY). Tyr-173 carries the post-translational modification Phosphotyrosine.

It belongs to the protein kinase superfamily. Ser/Thr protein kinase family. MAP kinase subfamily. HOG1 sub-subfamily. It depends on Mg(2+) as a cofactor. Post-translationally, dually phosphorylated on Thr-171 and Tyr-173, which activates the enzyme.

It catalyses the reaction L-seryl-[protein] + ATP = O-phospho-L-seryl-[protein] + ADP + H(+). The catalysed reaction is L-threonyl-[protein] + ATP = O-phospho-L-threonyl-[protein] + ADP + H(+). Its activity is regulated as follows. Activated by tyrosine and threonine phosphorylation. In terms of biological role, mitogen-activated protein kinase required for growth on media where sorbitol or mannitol is the sole carbon source. In Aspergillus clavatus (strain ATCC 1007 / CBS 513.65 / DSM 816 / NCTC 3887 / NRRL 1 / QM 1276 / 107), this protein is Mitogen-activated protein kinase mpkC (mpkC).